Reading from the N-terminus, the 158-residue chain is Troponin C, isoform 1 (158 aa).

Ser1 bears the N-acetylserine mark. EF-hand domains follow at residues 15–50 (EQIVVLRRAFDSFDRDKKGYISPETVSDILRMMGIK), 51–86 (VSSTSFKQIIEEIDEDGSGQIEFSEFLQLAAKFLIE), 91–126 (AMMKELKEAFRLYDKEGNGYITTQTLKEILHELDAR), and 127–158 (LTAEELVGIIEEIDEDGSGTVDFDEFMAMMTG). Residues Asp64, Asp66, Ser68, Gln70, and Glu75 each contribute to the Ca(2+) site. Ca(2+) is bound by residues Asp140, Asp142, Ser144, Thr146, and Glu151.

The protein belongs to the troponin C family.

Functionally, troponin is the central regulatory protein of striated muscle contraction. Tn consists of three components: Tn-I which is the inhibitor of actomyosin ATPase, Tn-T which contains the binding site for tropomyosin and Tn-C. The binding of calcium to Tn-C abolishes the inhibitory action of Tn on actin filaments. In Balanus nubilus (Giant acorn barnacle), this protein is Troponin C, isoform 1.